The sequence spans 365 residues: Pectate trisaccharide-lyase (365 aa).

The first 25 residues, 1-25, serve as a signal peptide directing secretion; the sequence is MRFSRVVSLVLLLVFTAVLTGAVKA. Positions 142, 164, and 168 each coordinate Ca(2+). A PbH1 1 repeat occupies 149–171; it reads SHHIWIDHCTFVNGNDGAVDIKK. Arg-222 is an active-site residue. A PbH1 2 repeat occupies 261 to 287; the sequence is GAKVHVEGNYFMGYGAVMAEAGIAFLP.

The protein belongs to the polysaccharide lyase 1 family. As to quaternary structure, homotetramer. It depends on Ca(2+) as a cofactor.

The protein localises to the secreted. The catalysed reaction is eliminative cleavage of unsaturated trigalacturonate as the major product from the reducing end of polygalacturonic acid/pectate.. Cleaves unsaturated trigalacturonate from pectin. Activity is highest towards polygalacturonic acid, activity on methylated pectins decreases with an increasing degree of methylation. This chain is Pectate trisaccharide-lyase, found in Thermotoga sp. (strain RQ2).